We begin with the raw amino-acid sequence, 445 residues long: Sensor protein kinase CarS (445 aa).

The first 24 residues, 1–24 (MRSIQRRLSVGLFAVLLVVGLVLA), serve as a signal peptide directing secretion. The helical transmembrane segment at 150–170 (FARVQWMGLGAGALALLLVLL) threads the bilayer. Residues 177 to 228 (RRSLRPLEEVRLQIAQLQQGQRSQLDNQAPEELEPLVEQINHLLAHTEETLK) form the HAMP domain. In terms of domain architecture, Histidine kinase spans 236–438 (NLGHALKTPL…RVSVELPLQK (203 aa)). Residue His-239 is modified to Phosphohistidine; by autocatalysis.

Its subcellular location is the membrane. The catalysed reaction is ATP + protein L-histidine = ADP + protein N-phospho-L-histidine.. Functionally, member of the two-component regulatory system CarS/CarR that regulates the expression of multiple genes involved in calcium signaling and homeostasis including CarO and CarP. May function as a membrane-associated protein kinase that phosphorylates CarR in response to environmental signals leading to activation of specific gene promoters. This Pseudomonas aeruginosa (strain ATCC 15692 / DSM 22644 / CIP 104116 / JCM 14847 / LMG 12228 / 1C / PRS 101 / PAO1) protein is Sensor protein kinase CarS (carS).